A 278-amino-acid chain; its full sequence is ABC transporter I family member 11, chloroplastic (278 aa).

The N-terminal 49 residues, M1–S49, are a transit peptide targeting the chloroplast. Positions I51 to L278 constitute an ABC transporter domain. G85–T92 is an ATP binding site.

Belongs to the ABC transporter superfamily. ABCI family.

The protein localises to the plastid. It localises to the chloroplast. In Arabidopsis thaliana (Mouse-ear cress), this protein is ABC transporter I family member 11, chloroplastic (ABCI11).